A 269-amino-acid polypeptide reads, in one-letter code: Formamidopyrimidine-DNA glycosylase (269 aa).

The active-site Schiff-base intermediate with DNA is P2. The Proton donor role is filled by E3. K57 acts as the Proton donor; for beta-elimination activity in catalysis. 3 residues coordinate DNA: H90, R109, and K150. Residues 235-269 (QVYGKAGESCPECGEAIQELKIGQRNTFYCSYCQC) form an FPG-type zinc finger. R259 functions as the Proton donor; for delta-elimination activity in the catalytic mechanism.

The protein belongs to the FPG family. As to quaternary structure, monomer. Requires Zn(2+) as cofactor.

The enzyme catalyses Hydrolysis of DNA containing ring-opened 7-methylguanine residues, releasing 2,6-diamino-4-hydroxy-5-(N-methyl)formamidopyrimidine.. It carries out the reaction 2'-deoxyribonucleotide-(2'-deoxyribose 5'-phosphate)-2'-deoxyribonucleotide-DNA = a 3'-end 2'-deoxyribonucleotide-(2,3-dehydro-2,3-deoxyribose 5'-phosphate)-DNA + a 5'-end 5'-phospho-2'-deoxyribonucleoside-DNA + H(+). Its function is as follows. Involved in base excision repair of DNA damaged by oxidation or by mutagenic agents. Acts as a DNA glycosylase that recognizes and removes damaged bases. Has a preference for oxidized purines, such as 7,8-dihydro-8-oxoguanine (8-oxoG). Has AP (apurinic/apyrimidinic) lyase activity and introduces nicks in the DNA strand. Cleaves the DNA backbone by beta-delta elimination to generate a single-strand break at the site of the removed base with both 3'- and 5'-phosphates. The chain is Formamidopyrimidine-DNA glycosylase from Vibrio vulnificus (strain YJ016).